A 171-amino-acid chain; its full sequence is Disulfide bond formation protein B (171 aa).

Residues Met1–Val8 are Cytoplasmic-facing. Residues Ser9–Tyr25 form a helical membrane-spanning segment. At Leu26–Val43 the chain is on the periplasmic side. Cys35 and Cys38 are joined by a disulfide. Residues Gly44–Pro60 form a helical membrane-spanning segment. Topologically, residues Val61–Arg67 are cytoplasmic. Residues Val68–Ile85 traverse the membrane as a helical segment. The Periplasmic segment spans residues Arg86 to Val142. Cys101 and Cys128 form a disulfide bridge. The chain crosses the membrane as a helical span at residues Trp143 to Arg161. Over Arg162–Lys171 the chain is Cytoplasmic.

The protein belongs to the DsbB family.

The protein resides in the cell inner membrane. Its function is as follows. Required for disulfide bond formation in some periplasmic proteins. Acts by oxidizing the DsbA protein. The chain is Disulfide bond formation protein B from Acinetobacter baylyi (strain ATCC 33305 / BD413 / ADP1).